Here is a 300-residue protein sequence, read N- to C-terminus: Tyrosine recombinase XerC (300 aa).

The 87-residue stretch at 4 to 90 folds into the Core-binding (CB) domain; that stretch reads VALSLDVSRF…ALRSFFDWLV (87 aa). Residues 111–290 form the Tyr recombinase domain; sequence HLPKNIDVDD…DFQHLASVYD (180 aa). Active-site residues include arginine 150, lysine 174, histidine 242, arginine 245, and histidine 268. Tyrosine 277 (O-(3'-phospho-DNA)-tyrosine intermediate) is an active-site residue.

Belongs to the 'phage' integrase family. XerC subfamily. In terms of assembly, forms a cyclic heterotetrameric complex composed of two molecules of XerC and two molecules of XerD, in which XerC interacts with XerD via its C-terminal region, XerD interacts with XerC via its C-terminal region and so on.

The protein localises to the cytoplasm. Its activity is regulated as follows. FtsK may regulate the catalytic switch between XerC and XerD in the heterotetrameric complex during the two steps of the recombination process. Site-specific tyrosine recombinase, which acts by catalyzing the cutting and rejoining of the recombining DNA molecules. Binds cooperatively to specific DNA consensus sequences that are separated from XerD binding sites by a short central region, forming the heterotetrameric XerC-XerD complex that recombines DNA substrates. The complex is essential to convert dimers of the bacterial chromosome into monomers to permit their segregation at cell division. It also contributes to the segregational stability of plasmids. In the complex XerC specifically exchanges the top DNA strands. This Salmonella typhi protein is Tyrosine recombinase XerC.